Reading from the N-terminus, the 130-residue chain is Putative antitoxin VapB50 (130 aa).

Functionally, possibly the antitoxin component of a type II toxin-antitoxin (TA) system. Its cognate toxin is VapC50. In Mycobacterium tuberculosis (strain ATCC 25618 / H37Rv), this protein is Putative antitoxin VapB50.